Consider the following 296-residue polypeptide: Carboxylesterase YbfK (296 aa).

Active-site charge relay system residues include Ser-129, Glu-244, and His-273.

It belongs to the AB hydrolase superfamily.

Its subcellular location is the cytoplasm. The enzyme catalyses a carboxylic ester + H2O = an alcohol + a carboxylate + H(+). Its function is as follows. Shows carboxylesterase activity in vitro. This chain is Carboxylesterase YbfK (ybfK), found in Bacillus subtilis (strain 168).